We begin with the raw amino-acid sequence, 142 residues long: MAKEFSRTRRIAQQLQQELAQVLQRDMKDPRIGFVTVNDVDVSRDLSYAKVYVTFFEEDEKLVEQKVAALDAAAGYIRSLVAGRMKLRVMPELRFIYDSSLVEGMRMSNLVSRVISNDEAKQKQHGVETDAEQGDTKEEGDK.

The segment at 119–142 (EAKQKQHGVETDAEQGDTKEEGDK) is disordered.

It belongs to the RbfA family. In terms of assembly, monomer. Binds 30S ribosomal subunits, but not 50S ribosomal subunits or 70S ribosomes.

Its subcellular location is the cytoplasm. In terms of biological role, one of several proteins that assist in the late maturation steps of the functional core of the 30S ribosomal subunit. Associates with free 30S ribosomal subunits (but not with 30S subunits that are part of 70S ribosomes or polysomes). Required for efficient processing of 16S rRNA. May interact with the 5'-terminal helix region of 16S rRNA. This chain is Ribosome-binding factor A, found in Shewanella pealeana (strain ATCC 700345 / ANG-SQ1).